Reading from the N-terminus, the 510-residue chain is 2-isopropylmalate synthase (510 aa).

The 263-residue stretch at 4-266 (IQVFDTTLRD…ETNLKLDETK (263 aa)) folds into the Pyruvate carboxyltransferase domain. The Mn(2+) site is built by D13, H201, H203, and N237. The interval 390 to 510 (QVETLQLQFV…DTARKDGVVS (121 aa)) is regulatory domain.

The protein belongs to the alpha-IPM synthase/homocitrate synthase family. LeuA type 1 subfamily. In terms of assembly, homodimer. The cofactor is Mn(2+).

The protein localises to the cytoplasm. The enzyme catalyses 3-methyl-2-oxobutanoate + acetyl-CoA + H2O = (2S)-2-isopropylmalate + CoA + H(+). The protein operates within amino-acid biosynthesis; L-leucine biosynthesis; L-leucine from 3-methyl-2-oxobutanoate: step 1/4. In terms of biological role, catalyzes the condensation of the acetyl group of acetyl-CoA with 3-methyl-2-oxobutanoate (2-ketoisovalerate) to form 3-carboxy-3-hydroxy-4-methylpentanoate (2-isopropylmalate). The protein is 2-isopropylmalate synthase of Staphylococcus carnosus (strain TM300).